The following is a 157-amino-acid chain: 2-C-methyl-D-erythritol 2,4-cyclodiphosphate synthase (157 aa).

A divalent metal cation-binding residues include aspartate 8, histidine 10, and histidine 42. 4-CDP-2-C-methyl-D-erythritol 2-phosphate is bound at residue 8 to 10; that stretch reads DVH. 4-CDP-2-C-methyl-D-erythritol 2-phosphate-binding positions include 56-58, 132-135, phenylalanine 139, and arginine 142; these read DIG and STSE.

The protein belongs to the IspF family. In terms of assembly, homotrimer. A divalent metal cation serves as cofactor.

It carries out the reaction 4-CDP-2-C-methyl-D-erythritol 2-phosphate = 2-C-methyl-D-erythritol 2,4-cyclic diphosphate + CMP. The protein operates within isoprenoid biosynthesis; isopentenyl diphosphate biosynthesis via DXP pathway; isopentenyl diphosphate from 1-deoxy-D-xylulose 5-phosphate: step 4/6. In terms of biological role, involved in the biosynthesis of isopentenyl diphosphate (IPP) and dimethylallyl diphosphate (DMAPP), two major building blocks of isoprenoid compounds. Catalyzes the conversion of 4-diphosphocytidyl-2-C-methyl-D-erythritol 2-phosphate (CDP-ME2P) to 2-C-methyl-D-erythritol 2,4-cyclodiphosphate (ME-CPP) with a corresponding release of cytidine 5-monophosphate (CMP). This chain is 2-C-methyl-D-erythritol 2,4-cyclodiphosphate synthase, found in Dehalococcoides mccartyi (strain CBDB1).